Reading from the N-terminus, the 426-residue chain is MASKRLMLDVEEEDDESGACGQENFDPHDADMEYQAKRRKSAVQETPLQWMLKRHIPASTTVLSPITELSQNMNGARLDGTPKSTQRIPANRTLNNFNSLSSRTLGSFSSSCSSYESGNSLDDEYMDMFEMESAENHNLELPDDLEVLLSGQLKSESNLEEMSNKKGSLRRCLSMYPSEQPEEAVQEPDQETNMPMKKMQRKTLSMNDAEIMRALGDEPELIGDLSKPCTLPCLATGIRHRDLKTISSDTLARLIQGEFDEQLGSQGGYEIIDCRYPYEFLGGHIRGAKNLYTRGQIQEAFPTLTSNQENRRIYVFHCEFSSERGPKLLRYLRSNDRSQHTHNYPALDYPELYILHNGYKEFFGLYSQLCQPSQYVPMLAPAHNDEFRYFRAKTKSWQCGEGGDSGIGGGGSRGLRKSRSRLLYAE.

The interval 1–27 is disordered; the sequence is MASKRLMLDVEEEDDESGACGQENFDP. A Rhodanese domain is found at 265 to 371; that stretch reads SQGGYEIIDC…FFGLYSQLCQ (107 aa). Cys-318 is an active-site residue.

This sequence belongs to the MPI phosphatase family. Expressed in developing male and female germ cells.

It catalyses the reaction O-phospho-L-tyrosyl-[protein] + H2O = L-tyrosyl-[protein] + phosphate. Functionally, required during meiosis. Regulates the transition from the extended G2 phase to the onset of the first meiotic division. This Drosophila melanogaster (Fruit fly) protein is Cdc25-like protein phosphatase twine (twe).